Consider the following 240-residue polypeptide: Pyridoxine 5'-phosphate synthase (240 aa).

Asn7 provides a ligand contact to 3-amino-2-oxopropyl phosphate. Residue 9 to 10 coordinates 1-deoxy-D-xylulose 5-phosphate; it reads DH. Arg18 provides a ligand contact to 3-amino-2-oxopropyl phosphate. Residue His43 is the Proton acceptor of the active site. Arg45 and His50 together coordinate 1-deoxy-D-xylulose 5-phosphate. The active-site Proton acceptor is Glu70. Thr100 is a binding site for 1-deoxy-D-xylulose 5-phosphate. His191 acts as the Proton donor in catalysis. 3-amino-2-oxopropyl phosphate-binding positions include Gly192 and 213 to 214; that span reads GH.

The protein belongs to the PNP synthase family. As to quaternary structure, homooctamer; tetramer of dimers.

It localises to the cytoplasm. It catalyses the reaction 3-amino-2-oxopropyl phosphate + 1-deoxy-D-xylulose 5-phosphate = pyridoxine 5'-phosphate + phosphate + 2 H2O + H(+). Its pathway is cofactor biosynthesis; pyridoxine 5'-phosphate biosynthesis; pyridoxine 5'-phosphate from D-erythrose 4-phosphate: step 5/5. Functionally, catalyzes the complicated ring closure reaction between the two acyclic compounds 1-deoxy-D-xylulose-5-phosphate (DXP) and 3-amino-2-oxopropyl phosphate (1-amino-acetone-3-phosphate or AAP) to form pyridoxine 5'-phosphate (PNP) and inorganic phosphate. The polypeptide is Pyridoxine 5'-phosphate synthase (Microcystis aeruginosa (strain NIES-843 / IAM M-2473)).